The primary structure comprises 455 residues: Carbamoyl phosphate synthase arginine-specific small chain (455 aa).

The N-terminal 28 residues, 1–28, are a transit peptide targeting the mitochondrion; that stretch reads MFARFCKAIPAKGRAFPSVNASIQSRLM. The region spanning 219–406 is the Glutamine amidotransferase type-1 domain; the sequence is HVAVIDCGVK…IDSVRKYKAN (188 aa). The active-site Nucleophile is C295. Residues H379 and E381 contribute to the active site.

This sequence belongs to the CarA family. In terms of assembly, heterodimer composed of 2 chains; the small (or glutamine) chain promotes the hydrolysis of glutamine to ammonia, which is used by the large (or ammonia) chain to synthesize carbamoyl phosphate.

The protein resides in the mitochondrion matrix. The catalysed reaction is hydrogencarbonate + L-glutamine + 2 ATP + H2O = carbamoyl phosphate + L-glutamate + 2 ADP + phosphate + 2 H(+). It catalyses the reaction L-glutamine + H2O = L-glutamate + NH4(+). The protein operates within amino-acid biosynthesis; L-arginine biosynthesis; carbamoyl phosphate from bicarbonate: step 1/1. Functionally, small subunit of the arginine-specific carbamoyl phosphate synthase (CPSase). CPSase catalyzes the formation of carbamoyl phosphate from the ammonia moiety of glutamine, carbonate, and phosphate donated by ATP, the first step of the arginine biosynthetic pathway. The small subunit (glutamine amidotransferase) binds and cleaves glutamine to supply the large subunit with the substrate ammonia. The protein is Carbamoyl phosphate synthase arginine-specific small chain (cpa1) of Aspergillus clavatus (strain ATCC 1007 / CBS 513.65 / DSM 816 / NCTC 3887 / NRRL 1 / QM 1276 / 107).